Consider the following 303-residue polypeptide: Glyceraldehyde-3-phosphate dehydrogenase (303 aa).

NAD(+)-binding positions include 6–7 (RI), Asp28, Arg72, and Thr114. D-glyceraldehyde 3-phosphate contacts are provided by residues 143-145 (SCT), Thr174, 203-204 (TG), and Arg226. Residue Cys144 is the Nucleophile of the active site.

Belongs to the glyceraldehyde-3-phosphate dehydrogenase family. In terms of assembly, homotetramer.

The protein resides in the cytoplasm. It carries out the reaction D-glyceraldehyde 3-phosphate + phosphate + NAD(+) = (2R)-3-phospho-glyceroyl phosphate + NADH + H(+). The protein operates within carbohydrate degradation; glycolysis; pyruvate from D-glyceraldehyde 3-phosphate: step 1/5. Its function is as follows. Catalyzes the oxidative phosphorylation of glyceraldehyde 3-phosphate (G3P) to 1,3-bisphosphoglycerate (BPG) using the cofactor NAD. The first reaction step involves the formation of a hemiacetal intermediate between G3P and a cysteine residue, and this hemiacetal intermediate is then oxidized to a thioester, with concomitant reduction of NAD to NADH. The reduced NADH is then exchanged with the second NAD, and the thioester is attacked by a nucleophilic inorganic phosphate to produce BPG. The chain is Glyceraldehyde-3-phosphate dehydrogenase (gap) from Klebsiella pneumoniae.